We begin with the raw amino-acid sequence, 477 residues long: Inositol phosphosphingolipids phospholipase C (477 aa).

Over 1-398 (MYNRKDRDVH…QRQKFFRGLH (398 aa)) the chain is Cytoplasmic. E100 lines the Mg(2+) pocket. H334 acts as the Proton acceptor in catalysis. Residues 399 to 417 (FWASILLLIASLVVTTFTA) traverse the membrane as a helical segment. At 418 to 424 (NKAGWSS) the chain is on the mitochondrial intermembrane side. Residues 425–449 (IFWVLFAIAVSISGTIDGAISFLFG) traverse the membrane as a helical segment. The Cytoplasmic portion of the chain corresponds to 450–477 (RSEIRALIEVEQEVLDAEHHLQTFLSEK).

The protein belongs to the neutral sphingomyelinase family. Mg(2+) is required as a cofactor.

Its subcellular location is the endoplasmic reticulum membrane. It localises to the mitochondrion outer membrane. The enzyme catalyses an N-acyl-(4R)-4-hydroxysphinganine-1-phosphoinositol + H2O = 1D-myo-inositol 1-phosphate + an N-acyl-(4R)-4-hydroxysphinganine + H(+). The catalysed reaction is a mannosylinositol-1-phospho-N-acyl-sphingoid base + H2O = mannosylinositol-1-phosphate + an N-acyl-sphingoid base + H(+). It carries out the reaction an inositol phosphomannosylinositol-1-phospho-N-acyl-(4R)-4-hydroxysphinganine + H2O = mannosyldiinositol-1-phosphate + an N-acyl-(4R)-4-hydroxysphinganine + H(+). Its pathway is lipid metabolism; sphingolipid metabolism. Activated through localization to mitochondria in specific growth phases. Functionally, responsible for the hydrolysis of the phosphosphingolipids (IPS), inositol phosphorylceramide (IPC), mannosylinositol phosphorylceramide (MIPC), and mannosyldiinositol phosphorylceramide (M(IP)2C). Regulates sphingolipid metabolism in mitochondria, especially the formation of alpha-hydroxylated very long chain phytoceramides. The generated ceramides contribute to the normal function of mitochondria. Also active on sphingomyelin (SM), but this activity is probably not physiologically relevant. The protein is Inositol phosphosphingolipids phospholipase C of Saccharomyces cerevisiae (strain ATCC 204508 / S288c) (Baker's yeast).